The following is a 516-amino-acid chain: Probable cytosol aminopeptidase (516 aa).

Mn(2+) is bound by residues K288 and D293. Residue K300 is part of the active site. D311, D370, and E372 together coordinate Mn(2+). The active site involves R374.

Belongs to the peptidase M17 family. Requires Mn(2+) as cofactor.

It is found in the cytoplasm. The enzyme catalyses Release of an N-terminal amino acid, Xaa-|-Yaa-, in which Xaa is preferably Leu, but may be other amino acids including Pro although not Arg or Lys, and Yaa may be Pro. Amino acid amides and methyl esters are also readily hydrolyzed, but rates on arylamides are exceedingly low.. It carries out the reaction Release of an N-terminal amino acid, preferentially leucine, but not glutamic or aspartic acids.. In terms of biological role, presumably involved in the processing and regular turnover of intracellular proteins. Catalyzes the removal of unsubstituted N-terminal amino acids from various peptides. The protein is Probable cytosol aminopeptidase of Cupriavidus taiwanensis (strain DSM 17343 / BCRC 17206 / CCUG 44338 / CIP 107171 / LMG 19424 / R1) (Ralstonia taiwanensis (strain LMG 19424)).